The primary structure comprises 207 residues: 3-demethoxyubiquinol 3-hydroxylase (207 aa).

The span at 22–32 (ERANPADRLAP) shows a compositional bias: basic and acidic residues. Residues 22–41 (ERANPADRLAPETEQMNPEE) form a disordered region. Fe cation contacts are provided by glutamate 56, glutamate 86, histidine 89, glutamate 138, glutamate 170, and histidine 173.

This sequence belongs to the COQ7 family. Requires Fe cation as cofactor.

The protein localises to the cell membrane. The enzyme catalyses a 5-methoxy-2-methyl-3-(all-trans-polyprenyl)benzene-1,4-diol + AH2 + O2 = a 3-demethylubiquinol + A + H2O. Its pathway is cofactor biosynthesis; ubiquinone biosynthesis. Functionally, catalyzes the hydroxylation of 2-nonaprenyl-3-methyl-6-methoxy-1,4-benzoquinol during ubiquinone biosynthesis. In Cupriavidus metallidurans (strain ATCC 43123 / DSM 2839 / NBRC 102507 / CH34) (Ralstonia metallidurans), this protein is 3-demethoxyubiquinol 3-hydroxylase.